The sequence spans 141 residues: Large ribosomal subunit protein uL11 (141 aa).

Belongs to the universal ribosomal protein uL11 family. Part of the ribosomal stalk of the 50S ribosomal subunit. Interacts with L10 and the large rRNA to form the base of the stalk. L10 forms an elongated spine to which L12 dimers bind in a sequential fashion forming a multimeric L10(L12)X complex. One or more lysine residues are methylated.

Forms part of the ribosomal stalk which helps the ribosome interact with GTP-bound translation factors. The protein is Large ribosomal subunit protein uL11 of Maridesulfovibrio salexigens (strain ATCC 14822 / DSM 2638 / NCIMB 8403 / VKM B-1763) (Desulfovibrio salexigens).